The primary structure comprises 448 residues: Potassium/proton antiporter CemA (448 aa).

The next 4 helical transmembrane spans lie at Ala-224 to Leu-244, Ile-325 to Ile-345, Ile-373 to Ile-393, and Ile-408 to Ile-428.

The protein belongs to the CemA family.

The protein resides in the plastid. The protein localises to the chloroplast inner membrane. It carries out the reaction K(+)(in) + H(+)(out) = K(+)(out) + H(+)(in). Contributes to K(+)/H(+) antiport activity by supporting proton efflux to control proton extrusion and homeostasis in chloroplasts in a light-dependent manner to modulate photosynthesis. Prevents excessive induction of non-photochemical quenching (NPQ) under continuous-light conditions. Indirectly promotes efficient inorganic carbon uptake into chloroplasts. In Angiopteris evecta (Mule's foot fern), this protein is Potassium/proton antiporter CemA.